Reading from the N-terminus, the 365-residue chain is Phosphate acyltransferase (365 aa).

It belongs to the PlsX family. As to quaternary structure, homodimer. Probably interacts with PlsY.

It localises to the cytoplasm. It catalyses the reaction a fatty acyl-[ACP] + phosphate = an acyl phosphate + holo-[ACP]. Its pathway is lipid metabolism; phospholipid metabolism. Its function is as follows. Catalyzes the reversible formation of acyl-phosphate (acyl-PO(4)) from acyl-[acyl-carrier-protein] (acyl-ACP). This enzyme utilizes acyl-ACP as fatty acyl donor, but not acyl-CoA. This is Phosphate acyltransferase from Klebsiella pneumoniae subsp. pneumoniae (strain ATCC 700721 / MGH 78578).